A 796-amino-acid polypeptide reads, in one-letter code: Toll-like receptor 6 (796 aa).

The N-terminal stretch at 1–31 (MTKDKEPIVKSFHFVCLMIIIVGTRIQFSDG) is a signal peptide. The Extracellular portion of the chain corresponds to 32-586 (NEFAVDKSKR…MSELSCNITL (555 aa)). LRR repeat units follow at residues 54-77 (TKVL…FLSE), 78-101 (LTVL…FNQD), 102-122 (LEYL…PIVS), 123-147 (FRHL…NLSQ), 148-168 (LNFL…PIAH), 169-196 (LHLS…ILNA), 197-219 (KTLH…SVNT), 220-250 (LGCL…RGST), 251-277 (LLNF…WPKP), 278-303 (VEYL…SKTT), 304-330 (LKAL…VFSE), 331-354 (MNIM…APST), 355-378 (FKFL…TLVK), 379-404 (LETL…DMPS), 405-429 (LEIL…WVES), 430-450 (IVVL…CLPP), 451-474 (RIKV…KLEA), 475-496 (LQEL…SFSS), and 497-520 (LSVL…SCQK). Cysteines 117 and 139 form a disulfide. An N-linked (GlcNAc...) asparagine glycan is attached at N144. N-linked (GlcNAc...) asparagine glycans are attached at residues N186 and N214. Residues C235 and C265 are joined by a disulfide bond. 2 N-linked (GlcNAc...) asparagine glycosylation sites follow: N253 and N285. A disulfide bridge connects residues C348 and C373. The N-linked (GlcNAc...) asparagine glycan is linked to N359. Residues N423 and N434 are each glycosylated (N-linked (GlcNAc...) asparagine). C424 and C447 are disulfide-bonded. Residues 521-575 (MRSIKAGDNPFQCTCELREFVKNIDQVSSEVLEGWPDSYKCDYPESYRGSPLKDF) form the LRRCT domain. An N-linked (GlcNAc...) asparagine glycan is attached at N583. Residues 587–607 (LIVTIGATMLVLAVTVTSLCI) traverse the membrane as a helical segment. Residues 608-796 (YLDLPWYLRM…LVTENNDVKS (189 aa)) are Cytoplasmic-facing. Residues 640–781 (LQFHAFISYS…LFWANIRAAF (142 aa)) enclose the TIR domain.

The protein belongs to the Toll-like receptor family. Homodimer (via cytoplasmic TIR domain). Heterodimer with TLR2 via their respective extracellular domains. Binds MYD88 via their respective TIR domains. Interacts with CD36, following CD36 stimulation by oxLDL or amyloid-beta 42, and forms a heterodimer with TLR4. The trimeric complex is internalized and triggers inflammatory response. LYN kinase activity facilitates TLR4:TLR6 heterodimerization and signal initiation. The heterodimer TLR2:TLR6 interacts with CD14 and CD36 in response to triacylated lipopeptides. Detected in monocytes, CD11c+ immature dendritic cells, plasmacytoid pre-dendritic cells and dermal microvessel endothelial cells.

The protein resides in the cell membrane. Its subcellular location is the cytoplasmic vesicle. It is found in the phagosome membrane. The protein localises to the membrane raft. It localises to the golgi apparatus. In terms of biological role, participates in the innate immune response to Gram-positive bacteria and fungi. Specifically recognizes diacylated and, to a lesser extent, triacylated lipopeptides. In response to diacylated lipopeptides, forms the activation cluster TLR2:TLR6:CD14:CD36, this cluster triggers signaling from the cell surface and subsequently is targeted to the Golgi in a lipid-raft dependent pathway. Acts via MYD88 and TRAF6, leading to NF-kappa-B activation, cytokine secretion and the inflammatory response. Recognizes mycoplasmal macrophage-activating lipopeptide-2kD (MALP-2), soluble tuberculosis factor (STF), phenol-soluble modulin (PSM) and B.burgdorferi outer surface protein A lipoprotein (OspA-L) cooperatively with TLR2. In complex with TLR4, promotes sterile inflammation in monocytes/macrophages in response to oxidized low-density lipoprotein (oxLDL) or amyloid-beta 42. In this context, the initial signal is provided by oxLDL- or amyloid-beta 42-binding to CD36. This event induces the formation of a heterodimer of TLR4 and TLR6, which is rapidly internalized and triggers inflammatory response, leading to the NF-kappa-B-dependent production of CXCL1, CXCL2 and CCL9 cytokines, via MYD88 signaling pathway, and CCL5 cytokine, via TICAM1 signaling pathway, as well as IL1B secretion. The protein is Toll-like receptor 6 (TLR6) of Homo sapiens (Human).